We begin with the raw amino-acid sequence, 868 residues long: Phospholipase D delta (868 aa).

In terms of domain architecture, C2 spans 1–154; it reads MAEKVSEDVM…ASGERISGWF (154 aa). D216 serves as a coordination point for Ca(2+). The PLD phosphodiesterase 1 domain maps to 368–403; that stretch reads TLFTHHQKCVLVDTQAVGNNRKVTAFIGGLDLCDGR. Active-site residues include H373, K375, and D380. H373 serves as a coordination point for a 1,2-diacyl-sn-glycero-3-phosphate. Ca(2+) contacts are provided by H409 and H440. Residues Q588 and H718 each coordinate a 1,2-diacyl-sn-glycero-3-phosphate. One can recognise a PLD phosphodiesterase 2 domain in the interval 713-740; that stretch reads FMIYVHAKGMIVDDEYVLMGSANINQRS. Residues H718, K720, and D725 contribute to the active site. E781 contacts Ca(2+).

The protein belongs to the phospholipase D family. C2-PLD subfamily. Interacts with GAPC1 and GAPC2. Increased interaction in the presence of H(2)O(2). Requires Ca(2+) as cofactor. As to expression, expressed in roots, leaves, stems, siliques and flowers. Strongly expressed in the vascular tissues of cotyledons and leaves under dehydration stress conditions. Expression is higher in old leaves than in young leaves. Expressed in leaves and guard cells. The isoform 2 may not be present in siliques.

The protein resides in the cell membrane. The catalysed reaction is a 1,2-diacyl-sn-glycero-3-phosphocholine + H2O = a 1,2-diacyl-sn-glycero-3-phosphate + choline + H(+). Activated by free oleic acid in a dose-dependent manner and less effectively by other unsaturated fatty acids such as linoleic and linolenic acids. Not activated by the saturated fatty acids stearic and palmitic acids. PIP2 and Ca(2+) stimulate activity by promoting lipid substrate binding to the active site. Activated by H(2)O(2) and by binding to GAPC. Functionally, hydrolyzes glycerol-phospholipids at the terminal phosphodiesteric bond to generate phosphatidic acids (PA). May be involved in PA accumulation in the dehydration stress response and in the transduction of hormonal and environmental signals to the microtubules cytoskeleton. Prefers phosphatidylethanolamine to phosphatidylcholine as substrate. Involved in H(2)O(2) and abscisic acid (ABA)-induced stomatal closure. Involved in nitric oxide (NO) signaling during stomatal closure. Plays a positive role in ABA-promoted senescence. Involved in basal defense and nonhost resistance. In Arabidopsis thaliana (Mouse-ear cress), this protein is Phospholipase D delta.